Here is a 450-residue protein sequence, read N- to C-terminus: Divalent metal cation transporter MntH (450 aa).

11 helical membrane-spanning segments follow: residues 34–54 (LSFL…GNWI), 61–81 (AQYG…AMLL), 108–128 (IAII…IAEV), 141–161 (IPLI…LFIM), 170–190 (AIVG…VYIS), 212–232 (GILY…NLYL), 263–283 (IQLS…ASLF), 305–325 (PVLG…ALLA), 361–381 (SLAV…AAKI), 383–403 (QLLV…LIPL), and 422–442 (VNII…YLIV).

This sequence belongs to the NRAMP family.

It localises to the cell membrane. Functionally, h(+)-stimulated, divalent metal cation uptake system. This is Divalent metal cation transporter MntH from Staphylococcus aureus (strain JH1).